A 260-amino-acid chain; its full sequence is tRNA pseudouridine synthase C (260 aa).

Asp54 is a catalytic residue.

Belongs to the pseudouridine synthase RluA family.

It catalyses the reaction uridine(65) in tRNA = pseudouridine(65) in tRNA. Functionally, responsible for synthesis of pseudouridine from uracil-65 in transfer RNAs. The sequence is that of tRNA pseudouridine synthase C (truC) from Escherichia coli O6:H1 (strain CFT073 / ATCC 700928 / UPEC).